The following is a 441-amino-acid chain: Trigger factor (441 aa).

The 86-residue stretch at 161 to 246 folds into the PPIase FKBP-type domain; the sequence is GDMVTVDFQG…VKDVKERILA (86 aa).

This sequence belongs to the FKBP-type PPIase family. Tig subfamily.

Its subcellular location is the cytoplasm. It carries out the reaction [protein]-peptidylproline (omega=180) = [protein]-peptidylproline (omega=0). Functionally, involved in protein export. Acts as a chaperone by maintaining the newly synthesized protein in an open conformation. Functions as a peptidyl-prolyl cis-trans isomerase. The sequence is that of Trigger factor from Desulfotalea psychrophila (strain LSv54 / DSM 12343).